We begin with the raw amino-acid sequence, 259 residues long: Carbonic anhydrase 1 (259 aa).

Ala-1 is subject to N-acetylalanine. In terms of domain architecture, Alpha-carbonic anhydrase spans 2 to 258; the sequence is HAWGYGPTDG…LKGRHVRASF (257 aa). The active-site Proton donor/acceptor is His-63. His-93, His-95, and His-118 together coordinate Zn(2+). Substrate is bound by residues Thr-197 and 197 to 198; that span reads TT.

This sequence belongs to the alpha-carbonic anhydrase family. It depends on Zn(2+) as a cofactor.

Its subcellular location is the cytoplasm. The catalysed reaction is hydrogencarbonate + H(+) = CO2 + H2O. In terms of biological role, catalyzes the reversible hydration of carbon dioxide. In Chionodraco hamatus (Antarctic teleost icefish), this protein is Carbonic anhydrase 1 (ca1).